Here is a 777-residue protein sequence, read N- to C-terminus: Biotin sulfoxide reductase (777 aa).

Ser148 lines the Mo-bis(molybdopterin guanine dinucleotide) pocket.

The protein belongs to the prokaryotic molybdopterin-containing oxidoreductase family. Mo-bis(molybdopterin guanine dinucleotide) is required as a cofactor.

The catalysed reaction is [thioredoxin]-disulfide + L-methionine + H2O = L-methionine (S)-S-oxide + [thioredoxin]-dithiol. In terms of biological role, this enzyme may serve as a scavenger, allowing the cell to utilize biotin sulfoxide as a biotin source. It reduces a spontaneous oxidation product of biotin, D-biotin D-sulfoxide (BSO or BDS), back to biotin. Also exhibits methionine-(S)-sulfoxide (Met-S-SO) reductase activity, acting specifically on the (S) enantiomer in the free, but not the protein-bound form. It thus plays a role in assimilation of oxidized methionines. This Escherichia coli (strain K12) protein is Biotin sulfoxide reductase (bisC).